A 229-amino-acid chain; its full sequence is MDSKGSAQKGSRLLLLLVVSNLLLCQGVVSTPVCPNGPGNCQVSLRDLFDRAVMVSHYIHNLSSEMFNEFDKRYAQGKGYITMALNSCHTSSLPTPEDKEQAQQTHHEVLMSLILGLLRSWNDPLYHLVTEVRGMKGVPDAILSRAIEIEEENKRLLEGMEMILGQVIPGAKETEPYPVWSGLPSLQTKDEEARHSAFYNLLHCLRRDSSKIDTYLKLLNCRIIYNNNC.

An N-terminal signal peptide occupies residues 1–30 (MDSKGSAQKGSRLLLLLVVSNLLLCQGVVS). An intrachain disulfide couples Cys34 to Cys41. A phosphoserine mark is found at Ser56, Ser64, and Ser120. Cystine bridges form between Cys88–Cys204 and Cys221–Cys229.

The protein belongs to the somatotropin/prolactin family. Interacts with PRLR.

It localises to the secreted. In terms of biological role, prolactin acts primarily on the mammary gland by promoting lactation. This Capra hircus (Goat) protein is Prolactin (PRL).